The primary structure comprises 44 residues: Protein PsbN (44 aa).

Residues 6 to 26 (FFYGVFLWCLLISVTGYSIYI) traverse the membrane as a helical segment.

The protein belongs to the PsbN family.

The protein localises to the plastid. It localises to the chloroplast thylakoid membrane. Functionally, may play a role in photosystem I and II biogenesis. The sequence is that of Protein PsbN from Ostreococcus tauri.